We begin with the raw amino-acid sequence, 757 residues long: Endonuclease MutS2 (757 aa).

321–328 (GPNMGGKT) is a binding site for ATP. Residues 681-756 (IDIRGMTVEE…GTGVTVVEVE (76 aa)) enclose the Smr domain.

The protein belongs to the DNA mismatch repair MutS family. MutS2 subfamily. In terms of assembly, homodimer. Binds to stalled ribosomes, contacting rRNA.

Functionally, endonuclease that is involved in the suppression of homologous recombination and thus may have a key role in the control of bacterial genetic diversity. Acts as a ribosome collision sensor, splitting the ribosome into its 2 subunits. Detects stalled/collided 70S ribosomes which it binds and splits by an ATP-hydrolysis driven conformational change. Acts upstream of the ribosome quality control system (RQC), a ribosome-associated complex that mediates the extraction of incompletely synthesized nascent chains from stalled ribosomes and their subsequent degradation. Probably generates substrates for RQC. The sequence is that of Endonuclease MutS2 from Thermotoga neapolitana (strain ATCC 49049 / DSM 4359 / NBRC 107923 / NS-E).